Reading from the N-terminus, the 163-residue chain is Endoribonuclease YbeY (163 aa).

Zn(2+) is bound by residues H123, H127, and H133.

Belongs to the endoribonuclease YbeY family. It depends on Zn(2+) as a cofactor.

The protein resides in the cytoplasm. Functionally, single strand-specific metallo-endoribonuclease involved in late-stage 70S ribosome quality control and in maturation of the 3' terminus of the 16S rRNA. The protein is Endoribonuclease YbeY of Helicobacter hepaticus (strain ATCC 51449 / 3B1).